Consider the following 209-residue polypeptide: Uracil phosphoribosyltransferase (209 aa).

5-phospho-alpha-D-ribose 1-diphosphate contacts are provided by residues Arg79, Arg104, and 131–139; that span reads DPMLATGNS. Uracil-binding positions include Ile194 and 199 to 201; that span reads GDA. Asp200 serves as a coordination point for 5-phospho-alpha-D-ribose 1-diphosphate.

It belongs to the UPRTase family. The cofactor is Mg(2+).

The enzyme catalyses UMP + diphosphate = 5-phospho-alpha-D-ribose 1-diphosphate + uracil. It participates in pyrimidine metabolism; UMP biosynthesis via salvage pathway; UMP from uracil: step 1/1. Allosterically activated by GTP. Functionally, catalyzes the conversion of uracil and 5-phospho-alpha-D-ribose 1-diphosphate (PRPP) to UMP and diphosphate. The chain is Uracil phosphoribosyltransferase from Rhizobium rhizogenes (strain K84 / ATCC BAA-868) (Agrobacterium radiobacter).